A 180-amino-acid chain; its full sequence is Tubulin polymerization-promoting protein homolog (180 aa).

Composition is skewed to basic and acidic residues over residues 136–158 (TGAH…RADT) and 169–180 (KNKDSYDKTHGK). Residues 136 to 180 (TGAHKERFDAEGKGKGKSGRADTTENTGYVGAYKNKDSYDKTHGK) are disordered.

The protein belongs to the TPPP family.

In terms of biological role, regulator of microtubule dynamics. This chain is Tubulin polymerization-promoting protein homolog, found in Caenorhabditis elegans.